Reading from the N-terminus, the 122-residue chain is Large ribosomal subunit protein uL14c (122 aa).

The protein belongs to the universal ribosomal protein uL14 family. In terms of assembly, part of the 50S ribosomal subunit.

The protein localises to the plastid. Its subcellular location is the chloroplast. Functionally, binds to 23S rRNA. This Vitis vinifera (Grape) protein is Large ribosomal subunit protein uL14c.